A 242-amino-acid chain; its full sequence is Terpene cyclase dpchB (242 aa).

A run of 7 helical transmembrane segments spans residues 16–36 (VVWI…ANYV), 51–71 (ALLP…MYAF), 78–95 (YVHF…YTAV), 114–134 (LIFV…AKQV), 141–161 (AWSA…QLLC), 169–189 (SYFL…QDII), and 207–227 (IWFV…LWYV).

The protein belongs to the paxB family.

The protein localises to the membrane. It functions in the pathway secondary metabolite biosynthesis; terpenoid biosynthesis. Terpene cyclase; part of the gene cluster that mediates the biosynthesis of the diterpenoid pyrones higginsianins A and B. The first step of the pathway is the synthesis of the alpha-pyrone moiety by the polyketide synthase dpchA via condensation of one acetyl-CoA starter unit with 3 malonyl-CoA units and 2 methylations. The alpha-pyrone is then combined with geranylgeranyl pyrophosphate (GGPP) formed by the GGPP synthase dpchD through the action of the prenyltransferase dpchC to yield a linear alpha-pyrone diterpenoid. Subsequent steps in the diterpenoid pyrone biosynthetic pathway involve the decalin core formation, which is initiated by the epoxidation of the C10-C11 olefin by the FAD-dependent oxidoreductase dpchE, and is followed by a cyclization cascade catalyzed by the terpene cyclase dpchB. The short chain dehydrogenase/reductase dpchG then oxidizes the 8S hydroxy group to a ketone and the short chain dehydrogenase/reductase dpchH reduces the ketone to the 8R hydroxy group to yield higginsianin B. Finally, the FAD-dependent oxidoreductase dpchF converts higginsianin B into higginsianin A. The sequence is that of Terpene cyclase dpchB from Colletotrichum higginsianum (strain IMI 349063) (Crucifer anthracnose fungus).